Consider the following 391-residue polypeptide: 2-deoxy-scyllo-inosose synthase (391 aa).

Residues D42, 73–76 (EVHK), 105–109 (GVTGN), 129–130 (TT), 140–142 (SLK), and 151–152 (KN) contribute to the NAD(+) site. K142 is an active-site residue. E184 is a binding site for Co(2+). E244 is an active-site residue. The Co(2+) site is built by H247 and H263.

Belongs to the sugar phosphate cyclases superfamily. DOI synthase family. The cofactor is NAD(+). It depends on Co(2+) as a cofactor.

It carries out the reaction D-glucose 6-phosphate = 2-deoxy-L-scyllo-inosose + phosphate. It participates in metabolic intermediate biosynthesis; 2-deoxystreptamine biosynthesis; 2-deoxystreptamine from D-glucose 6-phosphate: step 1/4. Its pathway is antibiotic biosynthesis; ribostamycin biosynthesis. Functionally, catalyzes the intramolecular carbocycle formation from D-glucose-6-phosphate to 2-deoxy-scyllo-inosose (DOI). This chain is 2-deoxy-scyllo-inosose synthase (rbmA), found in Streptomyces ribosidificus.